The sequence spans 376 residues: Succinyl-diaminopimelate desuccinylase (376 aa).

His67 contacts Zn(2+). Residue Asp69 is part of the active site. Residue Asp100 participates in Zn(2+) binding. Glu134 (proton acceptor) is an active-site residue. Residues Glu135, Glu163, and His349 each coordinate Zn(2+).

Belongs to the peptidase M20A family. DapE subfamily. In terms of assembly, homodimer. It depends on Zn(2+) as a cofactor. Co(2+) serves as cofactor.

It catalyses the reaction N-succinyl-(2S,6S)-2,6-diaminopimelate + H2O = (2S,6S)-2,6-diaminopimelate + succinate. Its pathway is amino-acid biosynthesis; L-lysine biosynthesis via DAP pathway; LL-2,6-diaminopimelate from (S)-tetrahydrodipicolinate (succinylase route): step 3/3. Catalyzes the hydrolysis of N-succinyl-L,L-diaminopimelic acid (SDAP), forming succinate and LL-2,6-diaminopimelate (DAP), an intermediate involved in the bacterial biosynthesis of lysine and meso-diaminopimelic acid, an essential component of bacterial cell walls. This Actinobacillus succinogenes (strain ATCC 55618 / DSM 22257 / CCUG 43843 / 130Z) protein is Succinyl-diaminopimelate desuccinylase.